Reading from the N-terminus, the 150-residue chain is Ribosomal RNA large subunit methyltransferase H (150 aa).

Residues Leu71, Gly100, and 118–123 each bind S-adenosyl-L-methionine; that span reads FSQMTF.

The protein belongs to the RNA methyltransferase RlmH family. In terms of assembly, homodimer.

The protein resides in the cytoplasm. It catalyses the reaction pseudouridine(1915) in 23S rRNA + S-adenosyl-L-methionine = N(3)-methylpseudouridine(1915) in 23S rRNA + S-adenosyl-L-homocysteine + H(+). Its function is as follows. Specifically methylates the pseudouridine at position 1915 (m3Psi1915) in 23S rRNA. This is Ribosomal RNA large subunit methyltransferase H from Mycoplasmopsis agalactiae (strain NCTC 10123 / CIP 59.7 / PG2) (Mycoplasma agalactiae).